A 348-amino-acid polypeptide reads, in one-letter code: Delta(6)-protoilludene synthase 18 (348 aa).

Residues aspartate 87, asparagine 223, serine 227, and glutamate 231 each contribute to the Mg(2+) site. A DDXXD motif motif is present at residues 87-91 (DEYTD). The NSE/DTE motif motif lies at 223–231 (NDLVSYNRE). Positions 311 and 312 each coordinate (2E,6E)-farnesyl diphosphate.

It belongs to the terpene synthase family. Mg(2+) serves as cofactor.

It catalyses the reaction (2E,6E)-farnesyl diphosphate = Delta(6)-protoilludene + diphosphate. Functionally, terpene cyclase that catalyzes the cyclization of farnesyl diphosphate (FPP) to delta(6)-protoilludene. This is Delta(6)-protoilludene synthase 18 from Postia placenta (strain ATCC 44394 / Madison 698-R) (Brown rot fungus).